We begin with the raw amino-acid sequence, 473 residues long: Ribosomal RNA small subunit methyltransferase F (473 aa).

S-adenosyl-L-methionine is bound by residues 124–130, glutamate 148, aspartate 175, and aspartate 193; that span reads ASAPGSK. Cysteine 246 (nucleophile) is an active-site residue.

The protein belongs to the class I-like SAM-binding methyltransferase superfamily. RsmB/NOP family.

It localises to the cytoplasm. The enzyme catalyses cytidine(1407) in 16S rRNA + S-adenosyl-L-methionine = 5-methylcytidine(1407) in 16S rRNA + S-adenosyl-L-homocysteine + H(+). Functionally, specifically methylates the cytosine at position 1407 (m5C1407) of 16S rRNA. This Aliivibrio salmonicida (strain LFI1238) (Vibrio salmonicida (strain LFI1238)) protein is Ribosomal RNA small subunit methyltransferase F.